The sequence spans 296 residues: Cadherin-4 (296 aa).

3 Cadherin domains span residues 1-101 (NVPE…RPEF), 102-216 (INQV…PPEF), and 217-296 (TTST…MLTI). Over 1–296 (NVPENSRGPF…ELNRAFMLTI (296 aa)) the chain is Extracellular. N-linked (GlcNAc...) asparagine glycans are attached at residues Asn-107 and Asn-236.

It is found in the cell membrane. Cadherins are calcium-dependent cell adhesion proteins. They preferentially interact with themselves in a homophilic manner in connecting cells; cadherins may thus contribute to the sorting of heterogeneous cell types. May play an important role in retinal development. This is Cadherin-4 (Cdh4) from Rattus norvegicus (Rat).